We begin with the raw amino-acid sequence, 481 residues long: Autolysin (481 aa).

The region spanning 7 to 142 is the Peptidase C51 domain; sequence KNEFIERLKT…LQDDNMLMIS (136 aa). Residues 198–323 form the N-acetylmuramoyl-L-alanine amidase domain; sequence SNPKGIVIHN…NEFTSTSCPH (126 aa). The SH3b domain maps to 398-466; the sequence is EESARFTNGN…YLPIRTWNGS (69 aa).

It belongs to the N-acetylmuramoyl-L-alanine amidase 2 family.

The protein resides in the secreted. It carries out the reaction Hydrolyzes the link between N-acetylmuramoyl residues and L-amino acid residues in certain cell-wall glycopeptides.. Its function is as follows. Autolysins are involved in some important biological processes such as cell separation, cell-wall turnover, competence for genetic transformation, formation of the flagella and sporulation. Autolysin strictly depends on the presence of choline-containing cell walls for activity. The polypeptide is Autolysin (lytA) (Staphylococcus aureus).